A 949-amino-acid polypeptide reads, in one-letter code: ATPase 5, plasma membrane-type (949 aa).

The residue at position 2 (Ser2) is an N-acetylserine. The Cytoplasmic segment spans residues 2–61 (SELDHIKNESVDLVRIPMEEVFEELKCTKQGLTANEASHRLDVFGPNKLEEKKESKLLKF). The chain crosses the membrane as a helical span at residues 62–81 (LGFMWNPLSWVMEVAALMAI). The Extracellular segment spans residues 82–93 (ALANGGGRPPDW). The helical transmembrane segment at 94 to 114 (QDFVGIVCLLLINSTISFIEE) threads the bilayer. The Cytoplasmic portion of the chain corresponds to 115-243 (NNAGNAAAAL…GHFQKVLTSI (129 aa)). Residues 244-264 (GNFCICSIALGIIVELLVMYP) traverse the membrane as a helical segment. Over 265-273 (IQRRRYRDG) the chain is Extracellular. A helical membrane pass occupies residues 274–291 (IDNLLVLLIGGIPIAMPS). The Cytoplasmic segment spans residues 292-643 (VLSVTMATGS…TSRAIFQRMK (352 aa)). Asp329 (4-aspartylphosphate intermediate) is an active-site residue. Asp588 and Asp592 together coordinate Mg(2+). Residues 644-665 (NYTIYAVSITIRIVFGFMFIAL) traverse the membrane as a helical segment. Residues 666 to 670 (IWQFD) are Extracellular-facing. A helical membrane pass occupies residues 671 to 693 (FSPFMVLIIAILNDGTIMTISKD). Topologically, residues 694–709 (RMKPSPQPDSWKLRDI) are cytoplasmic. Residues 710-730 (FSTGVVLGGYQALMTVVFFWV) traverse the membrane as a helical segment. Topologically, residues 731–751 (MKDSDFFSNYFGVRPLSQRPE) are extracellular. The chain crosses the membrane as a helical span at residues 752–772 (QMMAALYLQVSIISQALIFVT). Topologically, residues 773 to 784 (RSRSWSYAECPG) are cytoplasmic. The helical transmembrane segment at 785–805 (LLLLGAFVIAQLVATFIAVYA) threads the bilayer. At 806–813 (NWSFARIE) the chain is on the extracellular side. The chain crosses the membrane as a helical span at residues 814–834 (GAGWGWAGVIWLYSFLTYIPL). Residues 835-949 (DLLKFGIRYV…IDTIQQHYTV (115 aa)) are Cytoplasmic-facing. At Thr881 the chain carries Phosphothreonine. Phosphoserine is present on residues Ser899 and Ser931. The segment at 947-949 (YTV) is interaction with 14-3-3 proteins. A Phosphothreonine modification is found at Thr948.

This sequence belongs to the cation transport ATPase (P-type) (TC 3.A.3) family. Type IIIA subfamily. In terms of assembly, binds to 14-3-3 proteins. The binding is induced by phosphorylation of Thr-948. Binding to 14-3-3 proteins activates the H(+)-ATPase. Expressed in guard cells and leaves.

It is found in the membrane. It carries out the reaction ATP + H2O + H(+)(in) = ADP + phosphate + 2 H(+)(out). Functionally, the plasma membrane H(+) ATPase of plants and fungi generates a proton gradient that drives the active transport of nutrients by H(+)-symport. The resulting external acidification and/or internal alkinization may mediate growth responses. This chain is ATPase 5, plasma membrane-type (AHA5), found in Arabidopsis thaliana (Mouse-ear cress).